The following is a 753-amino-acid chain: 5-methyltetrahydropteroyltriglutamate--homocysteine methyltransferase (753 aa).

5-methyltetrahydropteroyltri-L-glutamate-binding positions include Arg17–Lys20 and Lys117. L-homocysteine is bound by residues Ile431 to Ser433 and Glu484. Residues Ile431–Ser433 and Glu484 each bind L-methionine. Residues Arg515–Cys516 and Trp561 each bind 5-methyltetrahydropteroyltri-L-glutamate. Asp599 contacts L-homocysteine. Residue Asp599 participates in L-methionine binding. Glu605 provides a ligand contact to 5-methyltetrahydropteroyltri-L-glutamate. Zn(2+)-binding residues include His641, Cys643, and Glu665. His694 (proton donor) is an active-site residue. Residue Cys726 participates in Zn(2+) binding.

The protein belongs to the vitamin-B12 independent methionine synthase family. Requires Zn(2+) as cofactor.

It carries out the reaction 5-methyltetrahydropteroyltri-L-glutamate + L-homocysteine = tetrahydropteroyltri-L-glutamate + L-methionine. The protein operates within amino-acid biosynthesis; L-methionine biosynthesis via de novo pathway; L-methionine from L-homocysteine (MetE route): step 1/1. In terms of biological role, catalyzes the transfer of a methyl group from 5-methyltetrahydrofolate to homocysteine resulting in methionine formation. The polypeptide is 5-methyltetrahydropteroyltriglutamate--homocysteine methyltransferase (Escherichia fergusonii (strain ATCC 35469 / DSM 13698 / CCUG 18766 / IAM 14443 / JCM 21226 / LMG 7866 / NBRC 102419 / NCTC 12128 / CDC 0568-73)).